A 428-amino-acid polypeptide reads, in one-letter code: Enolase (428 aa).

Residue glutamine 162 participates in (2R)-2-phosphoglycerate binding. The active-site Proton donor is glutamate 204. Residues aspartate 241, glutamate 283, and aspartate 310 each contribute to the Mg(2+) site. 4 residues coordinate (2R)-2-phosphoglycerate: lysine 335, arginine 364, serine 365, and lysine 386. Lysine 335 functions as the Proton acceptor in the catalytic mechanism.

This sequence belongs to the enolase family. It depends on Mg(2+) as a cofactor.

The protein resides in the cytoplasm. The protein localises to the secreted. It is found in the cell surface. It carries out the reaction (2R)-2-phosphoglycerate = phosphoenolpyruvate + H2O. Its pathway is carbohydrate degradation; glycolysis; pyruvate from D-glyceraldehyde 3-phosphate: step 4/5. Its function is as follows. Catalyzes the reversible conversion of 2-phosphoglycerate (2-PG) into phosphoenolpyruvate (PEP). It is essential for the degradation of carbohydrates via glycolysis. This chain is Enolase, found in Rhodococcus jostii (strain RHA1).